The sequence spans 309 residues: Metal ABC transporter substrate-binding lipoprotein SsaB (309 aa).

The first 19 residues, Met1 to Ala19, serve as a signal peptide directing secretion. Cys20 carries N-palmitoyl cysteine lipidation. Residue Cys20 is the site of S-diacylglycerol cysteine attachment. His67, His139, Glu205, and Asp280 together coordinate a divalent metal cation.

This sequence belongs to the bacterial solute-binding protein 9 family. Lipoprotein receptor antigen (Lrai) subfamily. Homodimer and homotrimer.

It is found in the cell membrane. Part of an ATP-binding cassette (ABC) transport system involved in metal import. Binds a metal with high affinity and specificity and delivers it to the membrane permease for translocation into the cytoplasm. Also acts as an adhesin which is involved on adherence to extracellular matrix. It is an important factor in the pathogenesis and infection. May contribute to the formation and accumulation of dental plaque. This Streptococcus sanguinis protein is Metal ABC transporter substrate-binding lipoprotein SsaB (ssaB).